Consider the following 193-residue polypeptide: Auxin-responsive protein IAA23 (193 aa).

The span at 1–12 (MSTSSGADSSPP) shows a compositional bias: polar residues. The tract at residues 1-66 (MSTSSGADSS…SPKARAVGWP (66 aa)) is disordered. Residues 21–36 (TALTLALPGSSSSSSS) are compositionally biased toward low complexity. The short motif at 23-27 (LTLAL) is the EAR-like (transcriptional repression) element. The span at 39–53 (DPERKRAAHADHADA) shows a compositional bias: basic and acidic residues. The PB1 domain occupies 83–191 (AKLVKVAVDG…EAVNLSPRRS (109 aa)).

Belongs to the Aux/IAA family. Homodimers and heterodimers. As to expression, highly expressed in roots. Expressed in seedlings.

The protein resides in the nucleus. Its function is as follows. Aux/IAA proteins are short-lived transcriptional factors that function as repressors of early auxin response genes at low auxin concentrations. This is Auxin-responsive protein IAA23 (IAA23) from Oryza sativa subsp. japonica (Rice).